The primary structure comprises 539 residues: Squalene monooxygenase SE1 (539 aa).

2 consecutive transmembrane segments (helical) span residues Leu-22–Leu-42 and Ile-71–Tyr-91. Residues Val-84–Ala-85, Glu-104–Arg-105, Arg-112, Arg-183, Val-199, Asp-361, and Met-374 each bind FAD. The helical transmembrane segment at Leu-472–Pro-492 threads the bilayer.

This sequence belongs to the squalene monooxygenase family. It depends on FAD as a cofactor. Mostly expressed in flower buds and leaves, and, to a lower extent, at high levels thought, in roots and petioles. In petioles, preferentially observed in vascular bundle tissue (phloem cells and parenchymatous cells near xylem) and resin ducts.

It localises to the microsome membrane. Its subcellular location is the endoplasmic reticulum membrane. The enzyme catalyses squalene + reduced [NADPH--hemoprotein reductase] + O2 = (S)-2,3-epoxysqualene + oxidized [NADPH--hemoprotein reductase] + H2O + H(+). It functions in the pathway terpene metabolism; lanosterol biosynthesis; lanosterol from farnesyl diphosphate: step 2/3. Component of the triterpene saponins (e.g. ginsenosides or panaxosides) and phytosterols biosynthetic pathways. Catalyzes the first oxygenation step in sterol biosynthesis and is suggested to be one of the rate-limiting enzymes in this pathway. This is Squalene monooxygenase SE1 from Panax ginseng (Korean ginseng).